The primary structure comprises 426 residues: Phosphomethylpyrimidine synthase (426 aa).

Residues asparagine 66, methionine 95, tyrosine 124, histidine 163, 185-187 (SRG), 226-229 (DGLR), and glutamate 265 each bind substrate. A Zn(2+)-binding site is contributed by histidine 269. Tyrosine 292 serves as a coordination point for substrate. A Zn(2+)-binding site is contributed by histidine 333. The [4Fe-4S] cluster site is built by cysteine 407, cysteine 410, and cysteine 414.

The protein belongs to the ThiC family. [4Fe-4S] cluster serves as cofactor.

The enzyme catalyses 5-amino-1-(5-phospho-beta-D-ribosyl)imidazole + S-adenosyl-L-methionine = 4-amino-2-methyl-5-(phosphooxymethyl)pyrimidine + CO + 5'-deoxyadenosine + formate + L-methionine + 3 H(+). The protein operates within cofactor biosynthesis; thiamine diphosphate biosynthesis. In terms of biological role, catalyzes the synthesis of the hydroxymethylpyrimidine phosphate (HMP-P) moiety of thiamine from aminoimidazole ribotide (AIR) in a radical S-adenosyl-L-methionine (SAM)-dependent reaction. This Thermococcus gammatolerans (strain DSM 15229 / JCM 11827 / EJ3) protein is Phosphomethylpyrimidine synthase.